A 379-amino-acid polypeptide reads, in one-letter code: uncharacterized protein (379 aa).

Belongs to the glycosyltransferase 28 family.

This is an uncharacterized protein from Methanosarcina mazei (strain ATCC BAA-159 / DSM 3647 / Goe1 / Go1 / JCM 11833 / OCM 88) (Methanosarcina frisia).